Here is a 266-residue protein sequence, read N- to C-terminus: Ribosomal RNA small subunit methyltransferase A (266 aa).

S-adenosyl-L-methionine contacts are provided by Asn-12, Leu-14, Gly-39, Glu-61, Asp-87, and Asn-107.

Belongs to the class I-like SAM-binding methyltransferase superfamily. rRNA adenine N(6)-methyltransferase family. RsmA subfamily.

It localises to the cytoplasm. It carries out the reaction adenosine(1518)/adenosine(1519) in 16S rRNA + 4 S-adenosyl-L-methionine = N(6)-dimethyladenosine(1518)/N(6)-dimethyladenosine(1519) in 16S rRNA + 4 S-adenosyl-L-homocysteine + 4 H(+). In terms of biological role, specifically dimethylates two adjacent adenosines (A1518 and A1519) in the loop of a conserved hairpin near the 3'-end of 16S rRNA in the 30S particle. May play a critical role in biogenesis of 30S subunits. The sequence is that of Ribosomal RNA small subunit methyltransferase A from Nitratidesulfovibrio vulgaris (strain ATCC 29579 / DSM 644 / CCUG 34227 / NCIMB 8303 / VKM B-1760 / Hildenborough) (Desulfovibrio vulgaris).